Reading from the N-terminus, the 472-residue chain is Divalent metal cation transporter MntH (472 aa).

Helical transmembrane passes span 59-79 (LLAF…PGNW), 92-112 (MLLS…ALAA), 144-164 (LAII…LNLL), 167-187 (VPII…LLLM), 196-216 (AFVI…IVLA), 233-253 (VVAD…TVMP), 288-308 (LALM…AAVF), 325-345 (LLAP…ALLA), 377-397 (VLTR…YGEQ), 402-422 (LLLL…IPLL), and 439-459 (WLMV…VKLL).

The protein belongs to the NRAMP family.

Its subcellular location is the cell inner membrane. H(+)-stimulated, divalent metal cation uptake system. This is Divalent metal cation transporter MntH from Xylella fastidiosa (strain Temecula1 / ATCC 700964).